A 205-amino-acid chain; its full sequence is Holliday junction branch migration complex subunit RuvA (205 aa).

The domain I stretch occupies residues 1 to 62 (MFEYVTGYVE…EDIMALYGFK (62 aa)). The interval 63–141 (TREERLLFTK…DVVPDAFVDL (79 aa)) is domain II. The segment at 142–152 (FSDTERFDEKK) is flexible linker. A domain III region spans residues 153-205 (GSSAELDEALEALRALGYAEREVSRVVPELLKESLTTDQYIKKALSLLLNGKR).

This sequence belongs to the RuvA family. As to quaternary structure, homotetramer. Forms an RuvA(8)-RuvB(12)-Holliday junction (HJ) complex. HJ DNA is sandwiched between 2 RuvA tetramers; dsDNA enters through RuvA and exits via RuvB. An RuvB hexamer assembles on each DNA strand where it exits the tetramer. Each RuvB hexamer is contacted by two RuvA subunits (via domain III) on 2 adjacent RuvB subunits; this complex drives branch migration. In the full resolvosome a probable DNA-RuvA(4)-RuvB(12)-RuvC(2) complex forms which resolves the HJ.

Its subcellular location is the cytoplasm. Its function is as follows. The RuvA-RuvB-RuvC complex processes Holliday junction (HJ) DNA during genetic recombination and DNA repair, while the RuvA-RuvB complex plays an important role in the rescue of blocked DNA replication forks via replication fork reversal (RFR). RuvA specifically binds to HJ cruciform DNA, conferring on it an open structure. The RuvB hexamer acts as an ATP-dependent pump, pulling dsDNA into and through the RuvAB complex. HJ branch migration allows RuvC to scan DNA until it finds its consensus sequence, where it cleaves and resolves the cruciform DNA. The sequence is that of Holliday junction branch migration complex subunit RuvA from Bacillus cereus (strain ATCC 14579 / DSM 31 / CCUG 7414 / JCM 2152 / NBRC 15305 / NCIMB 9373 / NCTC 2599 / NRRL B-3711).